We begin with the raw amino-acid sequence, 451 residues long: MTTRYRVEYALKSHRRDQLIEWIKGLLAVPFVLHSQPTAVQEEDATKLAAVAHDTHQRYAEIFSDVERLLNDHIDHELSGAAGKSKLKLLVPTVGTFFTRLYLREAFDYQDRQRFISRRRFVAPSFNDVRLILNSAQLLGLVHTKGLELVTFDGDVTLYDDGANLNADSPVIPRIIRLLQQGIKVGIVTAAGYTDEAKYYERLQGLLDVMRDASDLTDEQRSALIVMGGESNYLFRYDASSPHRLTYVPRENWVIGEMATWEEEDITQLLNIAESSLRACVANLNLPVSVLRKDRAVGVFPKNRGRLSREQLEETVLVVQNTVERSQVGSRLPFCAFNGCSPFFVSHYLRHHPPRRKYKPPIQPCMLISITQPGGNDVFVDIGDKSWGVRACQQYFGGIDPSRTLHVGDQFLSAGANDFKARLASTTAWIASPAETVQLLDELDTIQKVLA.

D153 serves as the catalytic Nucleophile. The IMP site is built by D153, D155, D161, T189, D377, and K385. D153 and D155 together coordinate Mg(2+). Catalysis depends on D155, which acts as the Proton donor. D409 contacts Mg(2+).

Belongs to the ISN1 family. In terms of assembly, homotetramer. It depends on Mg(2+) as a cofactor.

It catalyses the reaction IMP + H2O = inosine + phosphate. Its activity is regulated as follows. Allosterically activated by ATP. ATP binding is a prerequisite to magnesium and substrate binding. ATP binds to 2 of the subunits in the homotetramer inducing a closure of these 2 subunits and the release of the C-terminal loop, thereby activating the enzyme. Its function is as follows. IMP-specific 5'-nucleotidase involved in IMP (inositol monophosphate) degradation. This Emericella nidulans (strain FGSC A4 / ATCC 38163 / CBS 112.46 / NRRL 194 / M139) (Aspergillus nidulans) protein is IMP-specific 5'-nucleotidase 1 (isn1).